The primary structure comprises 481 residues: UDP-N-acetylmuramoylalanine--D-glutamate ligase (481 aa).

Position 108–114 (108–114 (GTNGKTS)) interacts with ATP.

The protein belongs to the MurCDEF family.

It localises to the cytoplasm. It catalyses the reaction UDP-N-acetyl-alpha-D-muramoyl-L-alanine + D-glutamate + ATP = UDP-N-acetyl-alpha-D-muramoyl-L-alanyl-D-glutamate + ADP + phosphate + H(+). The protein operates within cell wall biogenesis; peptidoglycan biosynthesis. Its function is as follows. Cell wall formation. Catalyzes the addition of glutamate to the nucleotide precursor UDP-N-acetylmuramoyl-L-alanine (UMA). This is UDP-N-acetylmuramoylalanine--D-glutamate ligase from Bifidobacterium longum (strain DJO10A).